The chain runs to 312 residues: Methionyl-tRNA formyltransferase (312 aa).

109–112 contributes to the (6S)-5,6,7,8-tetrahydrofolate binding site; that stretch reads SLLP.

This sequence belongs to the Fmt family.

It carries out the reaction L-methionyl-tRNA(fMet) + (6R)-10-formyltetrahydrofolate = N-formyl-L-methionyl-tRNA(fMet) + (6S)-5,6,7,8-tetrahydrofolate + H(+). Attaches a formyl group to the free amino group of methionyl-tRNA(fMet). The formyl group appears to play a dual role in the initiator identity of N-formylmethionyl-tRNA by promoting its recognition by IF2 and preventing the misappropriation of this tRNA by the elongation apparatus. The protein is Methionyl-tRNA formyltransferase of Listeria welshimeri serovar 6b (strain ATCC 35897 / DSM 20650 / CCUG 15529 / CIP 8149 / NCTC 11857 / SLCC 5334 / V8).